Consider the following 335-residue polypeptide: UPF0104 membrane protein PH1989 (335 aa).

The next 8 helical transmembrane spans lie at 4 to 24, 34 to 54, 62 to 82, 122 to 142, 148 to 168, 231 to 251, 266 to 286, and 304 to 324; these read YLLI…AGIE, DIRF…IWAV, GANI…GIFL, ILDV…ALTI, LIIL…TTVF, LYSF…FLSL, ASIA…TEVV, and VTML…GILV.

The protein belongs to the UPF0104 family.

Its subcellular location is the cell membrane. This is UPF0104 membrane protein PH1989 from Pyrococcus horikoshii (strain ATCC 700860 / DSM 12428 / JCM 9974 / NBRC 100139 / OT-3).